The chain runs to 161 residues: Regulator of ribonuclease activity A (161 aa).

The protein belongs to the RraA family. In terms of assembly, homotrimer. Binds to both RNA-binding sites in the C-terminal region of Rne and to RhlB.

It is found in the cytoplasm. Its function is as follows. Globally modulates RNA abundance by binding to RNase E (Rne) and regulating its endonucleolytic activity. Can modulate Rne action in a substrate-dependent manner by altering the composition of the degradosome. Modulates RNA-binding and helicase activities of the degradosome. This Shigella flexneri serotype 5b (strain 8401) protein is Regulator of ribonuclease activity A.